A 231-amino-acid polypeptide reads, in one-letter code: NADH-ubiquinone oxidoreductase chain 4 (231 aa).

Transmembrane regions (helical) follow at residues 1–21 (PIAGSMVLAAILLKLGGYGII), 34–54 (MFLPFIVLALWGATLANLTCL), 62–84 (LIAYSSISHMGLVVATIIIQTPW), 89–111 (AMALMIAHGFTSSALFCLANTTY), 128–148 (ILPMATTWWLLANLMNIAIPP), and 169–189 (TIIMLGLSMLITASYSLHMFL).

It belongs to the complex I subunit 4 family.

It is found in the mitochondrion membrane. It carries out the reaction a ubiquinone + NADH + 5 H(+)(in) = a ubiquinol + NAD(+) + 4 H(+)(out). Functionally, core subunit of the mitochondrial membrane respiratory chain NADH dehydrogenase (Complex I) that is believed to belong to the minimal assembly required for catalysis. Complex I functions in the transfer of electrons from NADH to the respiratory chain. The immediate electron acceptor for the enzyme is believed to be ubiquinone. In Bothrops erythromelas (Caatinga lance head), this protein is NADH-ubiquinone oxidoreductase chain 4 (MT-ND4).